A 276-amino-acid polypeptide reads, in one-letter code: NAD kinase (276 aa).

Residue aspartate 61 is the Proton acceptor of the active site. Residues 61–62, arginine 66, 135–136, arginine 146, histidine 163, aspartate 165, and alanine 200 contribute to the NAD(+) site; these read DG and NE.

It belongs to the NAD kinase family. Requires a divalent metal cation as cofactor.

Its subcellular location is the cytoplasm. The catalysed reaction is NAD(+) + ATP = ADP + NADP(+) + H(+). Involved in the regulation of the intracellular balance of NAD and NADP, and is a key enzyme in the biosynthesis of NADP. Catalyzes specifically the phosphorylation on 2'-hydroxyl of the adenosine moiety of NAD to yield NADP. The sequence is that of NAD kinase from Chloroflexus aurantiacus (strain ATCC 29366 / DSM 635 / J-10-fl).